The sequence spans 313 residues: uncharacterized protein (313 aa).

6 residues coordinate a divalent metal cation: H8, H10, E126, H180, H207, and D262.

It belongs to the metallo-dependent hydrolases superfamily. TatD-type hydrolase family. It depends on a divalent metal cation as a cofactor.

Functionally, putative deoxyribonuclease. This is an uncharacterized protein from Saccharomyces cerevisiae (strain ATCC 204508 / S288c) (Baker's yeast).